The following is a 505-amino-acid chain: MSCDTQEATRECLGMNLDGNKEPVSLVESGVRSESEHLQVTIGATVPTGFEQTAAGEVREKLKSACRISKDRGKIYFDIAVESLAQVHCLRSVDNLFVVVQEFKDYQFKDTKEEVLRDFEELAGKLPWSDPLKVWQINTTFKKKKAKRRKANQSAGKEKADCGQGDKADEKDGKKKHASSTSDSHILDYYENPAIKEEISTLVGDVLSSCKDETGQSLREETEPQVQKFRVTCNRAGEKHCFTSNEAARDFGGAIQEYFKWKADMTNFDVEVLLNIHDNEVIVAIALTEESLHRRNITHFGPTTLRSTLAYGMLRLCEPKPTDVIVDPMCGTGAIPIEGATEWSHCYHIAGDNNPLAVNRAANNISSLLTKSQIKDGKTTWGLPIDAVQWDICNLPLRTASVDIIVTDMPFGKRMGSKKRNWNLYPACLREMSRVCRPGTGRAVLLTQDKKCFTKALSGMGHVWRKVHVVWVNIGGLHAAVYLLKRTAQAFVHPSDQDEGRDPPW.

Residues 145-182 (KAKRRKANQSAGKEKADCGQGDKADEKDGKKKHASSTS) are disordered. Over residues 156-173 (GKEKADCGQGDKADEKDG) the composition is skewed to basic and acidic residues. Positions 171–287 (KDGKKKHASS…DNEVIVAIAL (117 aa)) constitute a THUMP domain.

It belongs to the methyltransferase superfamily. Part of the heterodimeric THUMPD3-TRM112 methyltransferase complex; this complex forms an active tRNA methyltransferase, where TRMT112 acts as an activator of the catalytic subunit THUMPD3. In terms of tissue distribution, ubiquitously expressed. Abundantly expressed in the testis, also expressed in the brain, heart, kidney, liver, lung, muscle and spleen.

It localises to the cytoplasm. The catalysed reaction is guanosine(6) in tRNA + S-adenosyl-L-methionine = N(2)-methylguanosine(6) in tRNA + S-adenosyl-L-homocysteine + H(+). It catalyses the reaction guanosine(7) in tRNA + S-adenosyl-L-methionine = N(2)-methylguanosine(7) in tRNA + S-adenosyl-L-homocysteine + H(+). In terms of biological role, catalytic subunit of the THUMPD3-TRM112 methyltransferase complex, that specifically mediates the S-adenosyl-L-methionine-dependent N(2)-methylation of guanosine nucleotide at position 6 (m2G6) in tRNAs. This is one of the major tRNA (guanine-N(2))-methyltransferases. Also catalyzes the S-adenosyl-L-methionine-dependent N(2)-methylation of guanosine nucleotide at position 7 of tRNA(Trp). The sequence is that of tRNA (guanine(6)-N(2))-methyltransferase THUMP3 from Mus musculus (Mouse).